Consider the following 197-residue polypeptide: Putative peptidyl-prolyl cis-trans isomerase (197 aa).

The 182-residue stretch at 14 to 195 (NEIKVVMHTN…YDVVIESIDV (182 aa)) folds into the PPIase cyclophilin-type domain.

The protein belongs to the cyclophilin-type PPIase family.

The enzyme catalyses [protein]-peptidylproline (omega=180) = [protein]-peptidylproline (omega=0). PPIases accelerate the folding of proteins. It catalyzes the cis-trans isomerization of proline imidic peptide bonds in oligopeptides. The chain is Putative peptidyl-prolyl cis-trans isomerase from Staphylococcus epidermidis (strain ATCC 35984 / DSM 28319 / BCRC 17069 / CCUG 31568 / BM 3577 / RP62A).